A 102-amino-acid polypeptide reads, in one-letter code: Small ribosomal subunit protein uS10 (102 aa).

Belongs to the universal ribosomal protein uS10 family. Part of the 30S ribosomal subunit.

Involved in the binding of tRNA to the ribosomes. The sequence is that of Small ribosomal subunit protein uS10 from Pseudothermotoga lettingae (strain ATCC BAA-301 / DSM 14385 / NBRC 107922 / TMO) (Thermotoga lettingae).